Consider the following 247-residue polypeptide: ATP synthase subunit a, chloroplastic (247 aa).

Transmembrane regions (helical) follow at residues 36–56 (GQVL…SIFG), 95–115 (VPFI…GALV), 134–154 (INTT…AGFS), 199–219 (LVVG…LMLL), and 220–240 (GLFT…AYIG).

This sequence belongs to the ATPase A chain family. In terms of assembly, F-type ATPases have 2 components, CF(1) - the catalytic core - and CF(0) - the membrane proton channel. CF(1) has five subunits: alpha(3), beta(3), gamma(1), delta(1), epsilon(1). CF(0) has four main subunits: a, b, b' and c.

Its subcellular location is the plastid. The protein localises to the chloroplast thylakoid membrane. Key component of the proton channel; it plays a direct role in the translocation of protons across the membrane. The chain is ATP synthase subunit a, chloroplastic from Mesostigma viride (Green alga).